The following is a 350-amino-acid chain: uncharacterized protein (350 aa).

The first 27 residues, 1–27 (MKNKKRVLIASSLSCAILLLSAATTQA), serve as a signal peptide directing secretion. The tract at residues 28–71 (NSAHKDSQDQNKKEHVDKSQQKEKRNVTNKDKNSTVPDDIGKNG) is disordered. Positions 30–60 (AHKDSQDQNKKEHVDKSQQKEKRNVTNKDKN) are enriched in basic and acidic residues.

The protein belongs to the aerolysin family.

This is an uncharacterized protein from Staphylococcus aureus (strain MSSA476).